The following is a 224-amino-acid chain: Cytidylate kinase (224 aa).

11-19 contributes to the ATP binding site; that stretch reads GPAAAGKST.

Belongs to the cytidylate kinase family. Type 1 subfamily.

Its subcellular location is the cytoplasm. The catalysed reaction is CMP + ATP = CDP + ADP. It carries out the reaction dCMP + ATP = dCDP + ADP. This is Cytidylate kinase from Geobacillus thermodenitrificans (strain NG80-2).